We begin with the raw amino-acid sequence, 317 residues long: 1-phosphatidylinositol phosphodiesterase (317 aa).

An N-terminal signal peptide occupies residues 1–22; it reads MYKNYLQRTLVLLLCFILYFFT. Positions 58 to 196 constitute a PI-PLC X-box domain; the sequence is LAALSIPGTH…LKDVRGKILL (139 aa). The Proton acceptor role is filled by histidine 67. Histidine 115 functions as the Proton donor in the catalytic mechanism.

As to quaternary structure, monomer.

The protein resides in the secreted. The protein localises to the cytoplasm. The catalysed reaction is a 1,2-diacyl-sn-glycero-3-phospho-(1D-myo-inositol) = 1D-myo-inositol 1,2-cyclic phosphate + a 1,2-diacyl-sn-glycerol. Functionally, cleaves glycosylphosphatidylinositol (GPI) and phosphatidylinositol (PI) anchors but not PI phosphates. Important factor in pathogenesis, PI-PLC activity is present only in virulent listeria species. It may participate in the lysis of the phagolysosomal membrane. In Listeria monocytogenes serovar 1/2a (strain ATCC BAA-679 / EGD-e), this protein is 1-phosphatidylinositol phosphodiesterase (plcA).